Here is a 211-residue protein sequence, read N- to C-terminus: Uridine kinase (211 aa).

Residue 15–22 participates in ATP binding; it reads GGSGSGKT.

The protein belongs to the uridine kinase family.

The protein resides in the cytoplasm. It catalyses the reaction uridine + ATP = UMP + ADP + H(+). The catalysed reaction is cytidine + ATP = CMP + ADP + H(+). The protein operates within pyrimidine metabolism; CTP biosynthesis via salvage pathway; CTP from cytidine: step 1/3. It functions in the pathway pyrimidine metabolism; UMP biosynthesis via salvage pathway; UMP from uridine: step 1/1. The sequence is that of Uridine kinase from Latilactobacillus sakei subsp. sakei (strain 23K) (Lactobacillus sakei subsp. sakei).